Consider the following 537-residue polypeptide: O-phosphoserine--tRNA(Cys) ligase (537 aa).

Substrate-binding positions include 186 to 188 (HMT), 231 to 233 (SAS), 273 to 274 (YY), and asparagine 317.

It belongs to the class-II aminoacyl-tRNA synthetase family. O-phosphoseryl-tRNA(Cys) synthetase subfamily. In terms of assembly, homotetramer. Interacts with SepCysS.

The catalysed reaction is tRNA(Cys) + O-phospho-L-serine + ATP = O-phospho-L-seryl-tRNA(Cys) + AMP + diphosphate. In terms of biological role, catalyzes the attachment of O-phosphoserine (Sep) to tRNA(Cys). The chain is O-phosphoserine--tRNA(Cys) ligase from Methanococcus maripaludis (strain C6 / ATCC BAA-1332).